A 178-amino-acid chain; its full sequence is Protein GrpE (178 aa).

The span at 1 to 11 (MENTQENPTDQ) shows a compositional bias: polar residues. The segment at 1 to 31 (MENTQENPTDQTTEETGREAQAAENAAPAAE) is disordered. The segment covering 19 to 31 (EAQAAENAAPAAE) has biased composition (low complexity).

It belongs to the GrpE family. As to quaternary structure, homodimer.

The protein resides in the cytoplasm. Participates actively in the response to hyperosmotic and heat shock by preventing the aggregation of stress-denatured proteins, in association with DnaK and GrpE. It is the nucleotide exchange factor for DnaK and may function as a thermosensor. Unfolded proteins bind initially to DnaJ; upon interaction with the DnaJ-bound protein, DnaK hydrolyzes its bound ATP, resulting in the formation of a stable complex. GrpE releases ADP from DnaK; ATP binding to DnaK triggers the release of the substrate protein, thus completing the reaction cycle. Several rounds of ATP-dependent interactions between DnaJ, DnaK and GrpE are required for fully efficient folding. The protein is Protein GrpE of Burkholderia thailandensis (strain ATCC 700388 / DSM 13276 / CCUG 48851 / CIP 106301 / E264).